The chain runs to 108 residues: Large ribosomal subunit protein uL24 (108 aa).

The protein belongs to the universal ribosomal protein uL24 family. In terms of assembly, part of the 50S ribosomal subunit.

Its function is as follows. One of two assembly initiator proteins, it binds directly to the 5'-end of the 23S rRNA, where it nucleates assembly of the 50S subunit. In terms of biological role, one of the proteins that surrounds the polypeptide exit tunnel on the outside of the subunit. The protein is Large ribosomal subunit protein uL24 of Frankia casuarinae (strain DSM 45818 / CECT 9043 / HFP020203 / CcI3).